The chain runs to 205 residues: THO complex subunit 7 homolog (205 aa).

The stretch at 68–158 (AMNERETENY…KESLVSKLEL (91 aa)) forms a coiled coil. Positions 181-205 (KTDEGTALSPQQSITSPGKVALMDT) are disordered.

The protein belongs to the THOC7 family. Component of the THO subcomplex of the transcription/export (TREX) complex which seems to have a dynamic structure involving ATP-dependent remodeling.

It is found in the cytoplasm. The protein resides in the nucleus. It localises to the nucleus speckle. Functionally, may act as component of the THO subcomplex of the TREX complex which is thought to couple mRNA transcription, processing and nuclear export, and which specifically associates with spliced mRNA and not with unspliced pre-mRNA. The chain is THO complex subunit 7 homolog (thoc7) from Nematostella vectensis (Starlet sea anemone).